A 364-amino-acid polypeptide reads, in one-letter code: Glycosyltransferase 8 domain-containing protein 1 (364 aa).

Residues 1-5 (MRRVH) lie on the Cytoplasmic side of the membrane. The chain crosses the membrane as a helical; Signal-anchor for type II membrane protein span at residues 6–26 (ITVILLAAVIFLLVLHHNILG). Residues 27-364 (LSDILKRQNS…QFSLIRRHAE (338 aa)) lie on the Lumenal side of the membrane. Residues asparagine 102, asparagine 247, and asparagine 255 are each glycosylated (N-linked (GlcNAc...) asparagine).

This sequence belongs to the glycosyltransferase 8 family.

It is found in the membrane. This chain is Glycosyltransferase 8 domain-containing protein 1 (glt8d1), found in Xenopus laevis (African clawed frog).